The following is a 394-amino-acid chain: GPI transamidase component GAB1 (394 aa).

At 1–135 (MDSTALKVAL…TLLSCISRSS (135 aa)) the chain is on the cytoplasmic side. The chain crosses the membrane as a helical span at residues 136 to 156 (IIFTNFAISSSLYCILAEGNV). Topologically, residues 157–160 (LLSS) are lumenal. Residues 161-181 (VMISISGYLSVYPILLLIPLL) form a helical membrane-spanning segment. Over 182–190 (GMLKSWRQR) the chain is Cytoplasmic. The chain crosses the membrane as a helical span at residues 191–211 (ILSAIVSILSLLILLLFSYSI). Topologically, residues 212–224 (LGSQSWSFLTQVY) are lumenal. A helical membrane pass occupies residues 225–245 (GSIITFEKVFPNLGLWWYFFI). The interval 235–255 (PNLGLWWYFFIEMFDTFIPFF) is may be involved in recognition of long-chain fatty acids in GPI. The Cytoplasmic segment spans residues 246–250 (EMFDT). A helical transmembrane segment spans residues 251-271 (FIPFFKAVFNIFIAVFITPFT). Residues 272–297 (LRYHKQPFYAFILCIGWIVLTKPYPS) lie on the Lumenal side of the membrane. Residues 298 to 318 (LGDAGFFFSFLPFFTPLFGYL) traverse the membrane as a helical segment. Over 319–324 (RYPIIS) the chain is Cytoplasmic. A helical transmembrane segment spans residues 325 to 345 (ALLFLHAIVLAPIFYHLWVVL). Residues 346 to 351 (GSGNSN) lie on the Lumenal side of the membrane. A helical membrane pass occupies residues 352–372 (FFYAISLVYALAIASILVDLN). Residues 373–394 (WAMLRIEYDNGIPNFKLKVTQI) lie on the Cytoplasmic side of the membrane.

The protein belongs to the PIGU family. Forms a complex with GPI16, GPI17, GPI8 and GAA1.

It is found in the endoplasmic reticulum membrane. The protein operates within glycolipid biosynthesis; glycosylphosphatidylinositol-anchor biosynthesis. In terms of biological role, component of the GPI transamidase complex. May be involved in the recognition of either the GPI attachment signal or the lipid portion of GPI. The polypeptide is GPI transamidase component GAB1 (GAB1) (Saccharomyces cerevisiae (strain ATCC 204508 / S288c) (Baker's yeast)).